Consider the following 728-residue polypeptide: Double-strand break repair protein mre-11 (728 aa).

A compositionally biased stretch (acidic residues) spans Met-1–Val-12. Residues Met-1–Asp-45 form a disordered region. Mn(2+) contacts are provided by Asp-73, His-75, Asp-113, and Asn-181. Catalysis depends on His-182, which acts as the Proton donor. Residues His-269, His-301, and His-303 each coordinate Mn(2+). The tract at residues Lys-601 to Phe-728 is disordered. A compositionally biased stretch (acidic residues) spans Val-607–Pro-616. Polar residues predominate over residues Pro-622–Ser-632. Positions Ser-634 to Met-645 are enriched in acidic residues.

It belongs to the MRE11/RAD32 family. As to quaternary structure, component of the MRN complex composed of two heterodimers rad-50 and mre-11 associated with a single nbs-1. The cofactor is Mn(2+).

The protein localises to the nucleus. It localises to the chromosome. Functionally, core component of the MRN complex, which plays a central role in double-strand break (DSB) repair, DNA recombination, maintenance of telomere integrity and meiosis. The MRN complex is involved in the repair of DNA double-strand breaks (DSBs) via homologous recombination (HR), an error-free mechanism which primarily occurs during S and G2 phases. The complex (1) mediates the end resection of damaged DNA, which generates proper single-stranded DNA, a key initial steps in HR, and is (2) required for the recruitment of other repair factors and efficient activation of ATM and ATR upon DNA damage. Within the MRN complex, mre-11 possesses both single-strand endonuclease activity and double-strand-specific 3'-5' exonuclease activity. Mre-11 first endonucleolytically cleaves the 5' strand at DNA DSB ends to prevent non-homologous end joining (NHEJ) and licence HR. It then generates a single-stranded DNA gap via 3' to 5' exonucleolytic degradation, which is required for single-strand invasion and recombination. Required for meiotic crossing over and chiasma formation. Pachytene morphology and homolog pairing are normal. Vital in long term for maintenance of reproductive capacity of subsequent generations. The chain is Double-strand break repair protein mre-11 from Caenorhabditis elegans.